We begin with the raw amino-acid sequence, 167 residues long: U-scoloptoxin(08)-Er5b (167 aa).

A signal peptide spans 1–22; it reads MKTNCEFPLLCLLIVLVANVEG. The propeptide occupies 23–94; the sequence is EVEDTGLKMV…KRLWRNWERR (72 aa). RLWRNWE repeat units lie at residues 34–40, 61–67, and 86–92; these read RLWRNWE. Q95 carries the pyrrolidone carboxylic acid modification. Residues 107 to 113 form an RLWRNWE 4; approximate repeat; sequence ELWRNWE. A propeptide spanning residues 112–118 is cleaved from the precursor; it reads WEDLKRR. A Pyrrolidone carboxylic acid modification is found at Q119. The stretch at 134 to 140 is one RLWRNWE 5 repeat; it reads RLWRNWE. A propeptide spanning residues 139 to 167 is cleaved from the precursor; it reads WEDNHATLRKRSADSLSRQKRLGKERGKE. The tract at residues 147–167 is disordered; it reads RKRSADSLSRQKRLGKERGKE.

This sequence belongs to the scoloptoxin-08 family. Expressed by the venom gland.

The protein resides in the secreted. This is U-scoloptoxin(08)-Er5b from Ethmostigmus rubripes (Giant centipede).